Here is a 443-residue protein sequence, read N- to C-terminus: Glutamate--tRNA ligase 1 (443 aa).

The 'HIGH' region signature appears at 10–20; sequence PSPTGYIHVGN. Positions 241 to 245 match the 'KMSKS' region motif; sequence ALSKR. Position 244 (lysine 244) interacts with ATP.

It belongs to the class-I aminoacyl-tRNA synthetase family. Glutamate--tRNA ligase type 1 subfamily. In terms of assembly, monomer.

The protein localises to the cytoplasm. The enzyme catalyses tRNA(Glu) + L-glutamate + ATP = L-glutamyl-tRNA(Glu) + AMP + diphosphate. Functionally, catalyzes the attachment of glutamate to tRNA(Glu) in a two-step reaction: glutamate is first activated by ATP to form Glu-AMP and then transferred to the acceptor end of tRNA(Glu). This chain is Glutamate--tRNA ligase 1, found in Ruegeria pomeroyi (strain ATCC 700808 / DSM 15171 / DSS-3) (Silicibacter pomeroyi).